The sequence spans 363 residues: Endopolygalacturonase A (363 aa).

A signal peptide spans 1–20 (MQLLQSSVIAATVGAALVAA). A propeptide spanning residues 21–28 (VPVELEAR) is cleaved from the precursor. A disulfide bridge connects residues Cys-31 and Cys-46. 6 PbH1 repeats span residues 158–187 (SDNL…DVGS), 188–209 (STYI…AINS), 210–230 (GSHI…SIGS), 239–260 (VEDV…RIKT), 268–290 (VSNV…IVEQ), and 302–347 (TNGI…SITG). Asn-162 is a glycosylation site (N-linked (GlcNAc...) asparagine). Catalysis depends on Asp-202, which acts as the Proton donor. The cysteines at positions 204 and 220 are disulfide-linked. Residue His-224 is part of the active site. 2 disulfides stabilise this stretch: Cys-330–Cys-335 and Cys-354–Cys-363.

This sequence belongs to the glycosyl hydrolase 28 family.

Its subcellular location is the secreted. It catalyses the reaction (1,4-alpha-D-galacturonosyl)n+m + H2O = (1,4-alpha-D-galacturonosyl)n + (1,4-alpha-D-galacturonosyl)m.. Its function is as follows. Involved in maceration and soft-rotting of plant tissue. Hydrolyzes the 1,4-alpha glycosidic bonds of de-esterified pectate in the smooth region of the plant cell wall. The chain is Endopolygalacturonase A (pgaA) from Aspergillus flavus (strain ATCC MYA-384 / AF70).